The chain runs to 72 residues: Translation initiation factor IF-1 (72 aa).

The 72-residue stretch at 1–72 (MAKEELLEFP…TKGRITYRFK (72 aa)) folds into the S1-like domain.

Belongs to the IF-1 family. As to quaternary structure, component of the 30S ribosomal translation pre-initiation complex which assembles on the 30S ribosome in the order IF-2 and IF-3, IF-1 and N-formylmethionyl-tRNA(fMet); mRNA recruitment can occur at any time during PIC assembly.

The protein resides in the cytoplasm. Its function is as follows. One of the essential components for the initiation of protein synthesis. Stabilizes the binding of IF-2 and IF-3 on the 30S subunit to which N-formylmethionyl-tRNA(fMet) subsequently binds. Helps modulate mRNA selection, yielding the 30S pre-initiation complex (PIC). Upon addition of the 50S ribosomal subunit IF-1, IF-2 and IF-3 are released leaving the mature 70S translation initiation complex. The protein is Translation initiation factor IF-1 of Maricaulis maris (strain MCS10) (Caulobacter maris).